Here is a 142-residue protein sequence, read N- to C-terminus: Mediator of RNA polymerase II transcription subunit 21 (142 aa).

Residues 87-131 adopt a coiled-coil conformation; it reads AEEQLSRIDSLQKKLIQVEGEKIEAIKRKESLTKDIEELINEFTE.

The protein belongs to the Mediator complex subunit 21 family. In terms of assembly, component of the Mediator complex.

The protein resides in the nucleus. Functionally, component of the Mediator complex, a coactivator involved in the regulated transcription of nearly all RNA polymerase II-dependent genes. Mediator functions as a bridge to convey information from gene-specific regulatory proteins to the basal RNA polymerase II transcription machinery. Mediator is recruited to promoters by direct interactions with regulatory proteins and serves as a scaffold for the assembly of a functional preinitiation complex with RNA polymerase II and the general transcription factors. This is Mediator of RNA polymerase II transcription subunit 21 (SRB7) from Eremothecium gossypii (strain ATCC 10895 / CBS 109.51 / FGSC 9923 / NRRL Y-1056) (Yeast).